A 207-amino-acid chain; its full sequence is MSLLIEQARYHLSAHNARQLPDDGGYEVAFAGRSNAGKSSALNALTRQNALARVSKTPGRTQQLVFFQIQPERYLVDLPGYGYAKVPQDLQAHWQAFIDRYFRTREALRGLVVVMDIRHPLKDYDLQMLGYAAERGLPAHGLLTKADKLGRGQQMQTLQKVKKEVTSRFGDSVTVQTYSGESRQGVDELRAIVGAWLGLDVETTAAE.

In terms of domain architecture, EngB-type G spans 24 to 199 (GGYEVAFAGR…RAIVGAWLGL (176 aa)). GTP-binding positions include 32 to 39 (GRSNAGKS), 59 to 63 (GRTQQ), 77 to 80 (DLPG), 144 to 147 (TKAD), and 178 to 180 (YSG). Residues Ser-39 and Thr-61 each coordinate Mg(2+).

Belongs to the TRAFAC class TrmE-Era-EngA-EngB-Septin-like GTPase superfamily. EngB GTPase family. Requires Mg(2+) as cofactor.

Functionally, necessary for normal cell division and for the maintenance of normal septation. In Xanthomonas euvesicatoria pv. vesicatoria (strain 85-10) (Xanthomonas campestris pv. vesicatoria), this protein is Probable GTP-binding protein EngB.